A 158-amino-acid chain; its full sequence is Small ribosomal subunit protein uS7 (158 aa).

Belongs to the universal ribosomal protein uS7 family. As to quaternary structure, part of the 30S ribosomal subunit. Contacts proteins S9 and S11.

Functionally, one of the primary rRNA binding proteins, it binds directly to 16S rRNA where it nucleates assembly of the head domain of the 30S subunit. Is located at the subunit interface close to the decoding center, probably blocks exit of the E-site tRNA. The chain is Small ribosomal subunit protein uS7 from Leptospira biflexa.